A 98-amino-acid chain; its full sequence is NADH-ubiquinone oxidoreductase chain 4L (98 aa).

3 helical membrane passes run 1 to 21 (MSLT…GLLL), 29 to 49 (SLLC…MTIL), and 61 to 81 (IILL…LVMV).

Belongs to the complex I subunit 4L family. Core subunit of respiratory chain NADH dehydrogenase (Complex I) which is composed of 45 different subunits.

The protein resides in the mitochondrion inner membrane. The catalysed reaction is a ubiquinone + NADH + 5 H(+)(in) = a ubiquinol + NAD(+) + 4 H(+)(out). Functionally, core subunit of the mitochondrial membrane respiratory chain NADH dehydrogenase (Complex I) which catalyzes electron transfer from NADH through the respiratory chain, using ubiquinone as an electron acceptor. Part of the enzyme membrane arm which is embedded in the lipid bilayer and involved in proton translocation. This chain is NADH-ubiquinone oxidoreductase chain 4L (MT-ND4L), found in Vampyrodes caraccioli (Great stripe-faced bat).